The following is a 389-amino-acid chain: MSKSHLFTSESVSEGHPDKVADQISDAILDAILAQDPRGRVAAETLITTGLIVLAGEITTTAVVDYADVARQTVRRIGYNSSDMGFDWASCAVVQTLDKQSPDIAQGVDEGAGLDLDQGAGDQGLMFGFACDETDVLMPTPIYFAHRLTERQAMVRKDGRLPWLRPDAKSQVTVRYEDDRPVAIDTVVLSTQHAPDISHADLVEAVREEIIKPVLPPEMIHKDTKYLINPTGRFVIGGPVGDCGLTGRKIIVDTYGGQGSHGGGAFSGKDPSKVDRSSSYAGRYVAKNIVAAGLARRCEVQVAYAIGVSQPVSLMVDTFGTGVIDDDRIAALVQEHFDLRPKGIIQMLDLLRPIYAKTAAYGHFGREEPEFTWERTDKAAVLRDAAGLR.

ATP is bound at residue His-16. Asp-18 serves as a coordination point for Mg(2+). K(+) is bound at residue Glu-44. Positions 57 and 100 each coordinate L-methionine. The interval 100–110 (QSPDIAQGVDE) is flexible loop. Residues 167 to 169 (DAK), 233 to 234 (RF), Asp-242, 248 to 249 (RK), Ala-265, and Lys-269 contribute to the ATP site. Position 242 (Asp-242) interacts with L-methionine. Lys-273 is an L-methionine binding site.

This sequence belongs to the AdoMet synthase family. As to quaternary structure, homotetramer; dimer of dimers. Mg(2+) is required as a cofactor. It depends on K(+) as a cofactor.

The protein resides in the cytoplasm. The catalysed reaction is L-methionine + ATP + H2O = S-adenosyl-L-methionine + phosphate + diphosphate. Its pathway is amino-acid biosynthesis; S-adenosyl-L-methionine biosynthesis; S-adenosyl-L-methionine from L-methionine: step 1/1. In terms of biological role, catalyzes the formation of S-adenosylmethionine (AdoMet) from methionine and ATP. The overall synthetic reaction is composed of two sequential steps, AdoMet formation and the subsequent tripolyphosphate hydrolysis which occurs prior to release of AdoMet from the enzyme. This is S-adenosylmethionine synthase from Acidithiobacillus ferrooxidans (strain ATCC 23270 / DSM 14882 / CIP 104768 / NCIMB 8455) (Ferrobacillus ferrooxidans (strain ATCC 23270)).